The sequence spans 309 residues: Porphobilinogen deaminase (309 aa).

The residue at position 242 (Cys-242) is an S-(dipyrrolylmethanemethyl)cysteine.

It belongs to the HMBS family. Monomer. It depends on dipyrromethane as a cofactor.

The enzyme catalyses 4 porphobilinogen + H2O = hydroxymethylbilane + 4 NH4(+). It functions in the pathway porphyrin-containing compound metabolism; protoporphyrin-IX biosynthesis; coproporphyrinogen-III from 5-aminolevulinate: step 2/4. In terms of biological role, tetrapolymerization of the monopyrrole PBG into the hydroxymethylbilane pre-uroporphyrinogen in several discrete steps. The protein is Porphobilinogen deaminase of Shewanella sediminis (strain HAW-EB3).